Reading from the N-terminus, the 59-residue chain is Large ribosomal subunit protein bL32 (59 aa).

This sequence belongs to the bacterial ribosomal protein bL32 family.

This is Large ribosomal subunit protein bL32 from Synechococcus sp. (strain JA-2-3B'a(2-13)) (Cyanobacteria bacterium Yellowstone B-Prime).